The sequence spans 462 residues: MSALNNLFGNSKSDAAGTSSIAALFSKPNHVDERKVKSKARTVLTEPEQDKDEQEEENVQESASTVSEGVEKEQEEQEEQPKKKKKKTKKNDEENDNLEVQYYSKVLGDSKSKDEPKDEPKDDSSDSDNEDEATAVDKSSITGTESESAKVINLKEKELAKAERTIFIGNVPNEVITSKKVYKEFKKLLSKDPRSENDDHDDGEEDEEEEESKTKDVKFNVESIRFRSIAFEEALPRKVAFVHQKLHKSRDSINAYAVYGSSNPVKIMCQYLNGKVFNDHHLRVDSVTHPSPHDKRRSVFVGNLDFEEVEESLWKHFEPCGDIEYVRIIRDSKTNMGKGFAYVQFKDFQSVSKALLLHEKKIHEGKKARKLRISRCKNMRKAQGNQSSLQNNKLNDQQRTKLGRAKKVLGKADRAKLGEELTIEGLRASKGETTPVLKRTKNRSKTGRVTKRSIAFKKQNAQ.

2 disordered regions span residues 24 to 148 (LFSK…ESES) and 191 to 215 (KDPR…SKTK). Residues 47–59 (PEQDKDEQEEENV) show a composition bias toward acidic residues. A compositionally biased stretch (basic and acidic residues) spans 108-124 (GDSKSKDEPKDEPKDDS). Positions 125-134 (SDSDNEDEAT) are enriched in acidic residues. A compositionally biased stretch (polar residues) spans 137–146 (DKSSITGTES). Acidic residues predominate over residues 198 to 211 (DDHDDGEEDEEEEE). The region spanning 297-378 (RSVFVGNLDF…RKLRISRCKN (82 aa)) is the RRM domain. Disordered regions lie at residues 381-400 (KAQG…QQRT) and 432-462 (ETTP…QNAQ). The segment covering 383 to 397 (QGNQSSLQNNKLNDQ) has biased composition (polar residues). Positions 438–455 (KRTKNRSKTGRVTKRSIA) are enriched in basic residues.

It belongs to the RRM RBM34 family.

Its subcellular location is the nucleus. The protein resides in the nucleolus. Its function is as follows. Involved in pre-25S rRNA processing. This chain is Nucleolar protein 12 (NOP12), found in Kluyveromyces lactis (strain ATCC 8585 / CBS 2359 / DSM 70799 / NBRC 1267 / NRRL Y-1140 / WM37) (Yeast).